The following is a 236-amino-acid chain: Alanyl-tRNA editing protein AlaX-M (236 aa).

His-101, His-105, and His-205 together coordinate Zn(2+).

The protein belongs to the class-II aminoacyl-tRNA synthetase family. Editing domain AlaX-M subfamily. Zn(2+) serves as cofactor.

The protein localises to the cytoplasm. Its function is as follows. Functions in trans to edit the amino acid moiety from incorrectly charged Ser-tRNA(Ala). The polypeptide is Alanyl-tRNA editing protein AlaX-M (alaXM) (Saccharolobus solfataricus (strain ATCC 35092 / DSM 1617 / JCM 11322 / P2) (Sulfolobus solfataricus)).